A 106-amino-acid polypeptide reads, in one-letter code: Putative double-stranded DNA mimic protein VCM66_1163 (106 aa).

It belongs to the putative dsDNA mimic protein family.

In terms of biological role, may act as a double-stranded DNA (dsDNA) mimic. Probably regulates the activity of a dsDNA-binding protein. In Vibrio cholerae serotype O1 (strain M66-2), this protein is Putative double-stranded DNA mimic protein VCM66_1163.